The primary structure comprises 167 residues: Gametocyte-specific factor 1 (167 aa).

The residue at position 8 (Ser8) is a Phosphoserine. 2 CHHC U11-48K-type zinc fingers span residues 14–41 (LLQC…RKNH) and 48–75 (LATC…DDRS). Zn(2+) contacts are provided by Cys17, His23, His33, Cys37, Cys51, His57, His67, and Cys71.

The protein belongs to the UPF0224 (FAM112) family.

Its subcellular location is the cytoplasm. In terms of biological role, required for spermatogenesis and is involved in the suppression of retrotransposon transcription in male germ cells. The protein is Gametocyte-specific factor 1 (GTSF1) of Homo sapiens (Human).